A 222-amino-acid chain; its full sequence is Pyridoxine/pyridoxamine 5'-phosphate oxidase (222 aa).

FMN contacts are provided by residues 71–76, 86–87, Lys-93, and Gln-115; these read RMVLLK and YT. Substrate is bound at residue Lys-76. Substrate is bound by residues Tyr-133, Arg-137, and Ser-141. FMN is bound by residues 150-151 and Trp-195; that span reads QS. A substrate-binding site is contributed by 201 to 203; it reads RLH. An FMN-binding site is contributed by Arg-205.

The protein belongs to the pyridoxamine 5'-phosphate oxidase family. In terms of assembly, homodimer. FMN is required as a cofactor.

The catalysed reaction is pyridoxamine 5'-phosphate + O2 + H2O = pyridoxal 5'-phosphate + H2O2 + NH4(+). It carries out the reaction pyridoxine 5'-phosphate + O2 = pyridoxal 5'-phosphate + H2O2. It functions in the pathway cofactor metabolism; pyridoxal 5'-phosphate salvage; pyridoxal 5'-phosphate from pyridoxamine 5'-phosphate: step 1/1. It participates in cofactor metabolism; pyridoxal 5'-phosphate salvage; pyridoxal 5'-phosphate from pyridoxine 5'-phosphate: step 1/1. Its function is as follows. Catalyzes the oxidation of either pyridoxine 5'-phosphate (PNP) or pyridoxamine 5'-phosphate (PMP) into pyridoxal 5'-phosphate (PLP). This Caulobacter vibrioides (strain ATCC 19089 / CIP 103742 / CB 15) (Caulobacter crescentus) protein is Pyridoxine/pyridoxamine 5'-phosphate oxidase.